Here is a 235-residue protein sequence, read N- to C-terminus: Phosphoribosylaminoimidazole-succinocarboxamide synthase (235 aa).

Belongs to the SAICAR synthetase family.

The catalysed reaction is 5-amino-1-(5-phospho-D-ribosyl)imidazole-4-carboxylate + L-aspartate + ATP = (2S)-2-[5-amino-1-(5-phospho-beta-D-ribosyl)imidazole-4-carboxamido]succinate + ADP + phosphate + 2 H(+). The protein operates within purine metabolism; IMP biosynthesis via de novo pathway; 5-amino-1-(5-phospho-D-ribosyl)imidazole-4-carboxamide from 5-amino-1-(5-phospho-D-ribosyl)imidazole-4-carboxylate: step 1/2. The chain is Phosphoribosylaminoimidazole-succinocarboxamide synthase from Streptococcus agalactiae serotype Ia (strain ATCC 27591 / A909 / CDC SS700).